A 150-amino-acid chain; its full sequence is Regulatory protein RecX (150 aa).

The protein belongs to the RecX family.

The protein localises to the cytoplasm. Functionally, modulates RecA activity. In Ectopseudomonas mendocina (strain ymp) (Pseudomonas mendocina), this protein is Regulatory protein RecX.